A 438-amino-acid chain; its full sequence is 23S rRNA (uracil(1939)-C(5))-methyltransferase RlmD (438 aa).

Residues 11-69 (LQPESKHQQVLVEKLDHQGAGIAYLNKKPLFIDGTLPGEEVVTQLTESKSKFARGKLIK) form the TRAM domain. [4Fe-4S] cluster is bound by residues C82, C88, C91, and C169. The S-adenosyl-L-methionine site is built by Q272, F301, N306, E322, N349, and D370. C396 (nucleophile) is an active-site residue.

It belongs to the class I-like SAM-binding methyltransferase superfamily. RNA M5U methyltransferase family. RlmD subfamily.

It catalyses the reaction uridine(1939) in 23S rRNA + S-adenosyl-L-methionine = 5-methyluridine(1939) in 23S rRNA + S-adenosyl-L-homocysteine + H(+). Catalyzes the formation of 5-methyl-uridine at position 1939 (m5U1939) in 23S rRNA. This Vibrio vulnificus (strain YJ016) protein is 23S rRNA (uracil(1939)-C(5))-methyltransferase RlmD.